A 1393-amino-acid polypeptide reads, in one-letter code: DNA-directed RNA polymerase subunit beta' (1393 aa).

The Zn(2+) site is built by Cys-72, Cys-74, Cys-87, and Cys-90. The Mg(2+) site is built by Asp-463, Asp-465, and Asp-467. Residues Cys-812, Cys-887, Cys-894, and Cys-897 each coordinate Zn(2+).

It belongs to the RNA polymerase beta' chain family. As to quaternary structure, the RNAP catalytic core consists of 2 alpha, 1 beta, 1 beta' and 1 omega subunit. When a sigma factor is associated with the core the holoenzyme is formed, which can initiate transcription. Requires Mg(2+) as cofactor. Zn(2+) is required as a cofactor.

It catalyses the reaction RNA(n) + a ribonucleoside 5'-triphosphate = RNA(n+1) + diphosphate. DNA-dependent RNA polymerase catalyzes the transcription of DNA into RNA using the four ribonucleoside triphosphates as substrates. The polypeptide is DNA-directed RNA polymerase subunit beta' (Chlamydia felis (strain Fe/C-56) (Chlamydophila felis)).